Consider the following 280-residue polypeptide: Ribosomal RNA large subunit methyltransferase J (280 aa).

Residues histidine 19, histidine 42, serine 100, glutamate 118, 143–144, and aspartate 164 contribute to the S-adenosyl-L-methionine site; that span reads DG. The active-site Proton acceptor is the aspartate 164.

The protein belongs to the RlmJ family. Monomer.

The catalysed reaction is adenosine(2030) in 23S rRNA + S-adenosyl-L-methionine = N(6)-methyladenosine(2030) in 23S rRNA + S-adenosyl-L-homocysteine + H(+). Specifically methylates the adenine in position 2030 of 23S rRNA. Nascent 23S rRNA seems to be the natural substrate. Appears to be not necessary for ribosome assembly. Required for the utilization of extracellular DNA as the sole source of carbon and energy. The polypeptide is Ribosomal RNA large subunit methyltransferase J (Escherichia coli (strain K12)).